Consider the following 448-residue polypeptide: MNTHLTETWEKAINIIKGELTEVSFNTWIKSINPISLENNSLKLAVPNDFTKGILESRYKDLIVNALKLLTSKKYNIDFIVTTEEKIEENQKNHNNEKSNIVVNDEMSTMLNPKYTFDSFVIGNSNRFAHAASLAVAESPAKAYNPLFIYGGVGLGKTHLMHAIGHYILHNNPKSQVVYVSSEKFTNELINSIKDDKNVEFRNKYRNIDILLVDDIQFIAGKERTQEEFFHTFNALYEANKQIIISSDRPPKEIPTLEDRLRSRFEWGLIADIQAPDFETRMAILKKKADVENLNIPNEVMVYIATKIKSNIRELEGALIRIVAFSSLTNKEISIDLASEALKDIISSKQTRQVTIDIIQEVVANYYNLKIEDLKSARRTRNIAFPRQIAMYLSRKLTDMSLPKIGEEFGGRDHTTVIHAYEKISNNLKKDESLQNAIKELNKRINQK.

A domain I, interacts with DnaA modulators region spans residues 1-73 (MNTHLTETWE…VNALKLLTSK (73 aa)). A domain II region spans residues 73–109 (KKYNIDFIVTTEEKIEENQKNHNNEKSNIVVNDEMST). Residues 110–326 (MLNPKYTFDS…GALIRIVAFS (217 aa)) form a domain III, AAA+ region region. Residues glycine 154, glycine 156, lysine 157, and threonine 158 each contribute to the ATP site. A domain IV, binds dsDNA region spans residues 327-448 (SLTNKEISID…KELNKRINQK (122 aa)).

This sequence belongs to the DnaA family. Oligomerizes as a right-handed, spiral filament on DNA at oriC.

It is found in the cytoplasm. In terms of biological role, plays an essential role in the initiation and regulation of chromosomal replication. ATP-DnaA binds to the origin of replication (oriC) to initiate formation of the DNA replication initiation complex once per cell cycle. Binds the DnaA box (a 9 base pair repeat at the origin) and separates the double-stranded (ds)DNA. Forms a right-handed helical filament on oriC DNA; dsDNA binds to the exterior of the filament while single-stranded (ss)DNA is stabiized in the filament's interior. The ATP-DnaA-oriC complex binds and stabilizes one strand of the AT-rich DNA unwinding element (DUE), permitting loading of DNA polymerase. After initiation quickly degrades to an ADP-DnaA complex that is not apt for DNA replication. Binds acidic phospholipids. This chain is Chromosomal replication initiator protein DnaA, found in Clostridium botulinum (strain ATCC 19397 / Type A).